A 612-amino-acid polypeptide reads, in one-letter code: Cytoplasmic dynein 1 intermediate chain 2 (612 aa).

Composition is skewed to basic and acidic residues over residues 1 to 13 (MSDKSDLKAELER) and 20 to 43 (QIREEKKRKEEERKKKETDQKKEA). A disordered region spans residues 1 to 188 (MSDKSDLKAE…PHELTEEEKQ (188 aa)). Serine 2 is subject to N-acetylserine. Serine 51 is subject to Diphosphoserine. 2 positions are modified to phosphoserine: serine 51 and serine 84. Residues 82 to 91 (PSSKSVSTPS) are compositionally biased toward low complexity. Threonine 89 is subject to Phosphothreonine. Residues serine 91, serine 95, and serine 98 each carry the phosphoserine modification. Residues 164–188 (EKTLKKDEENDSKAPPHELTEEEKQ) show a composition bias toward basic and acidic residues. WD repeat units follow at residues 251 to 300 (SKHR…TTPE), 304 to 344 (HCQS…RTPV), 353 to 394 (AHTH…HPQD), 403 to 443 (SKAV…AGIS), 448 to 493 (GHQG…PLYS), 496 to 536 (DNSD…EVPT), and 542 to 581 (EGNPALNRVRWTHSGREIAVGDSEGQIVIYDVGEQIAVPR).

The protein belongs to the dynein intermediate chain family. As to quaternary structure, homodimer. The cytoplasmic dynein 1 complex consists of two catalytic heavy chains (HCs) and a number of non-catalytic subunits presented by intermediate chains (ICs), light intermediate chains (LICs) and light chains (LCs); the composition seems to vary in respect to the IC, LIC and LC composition. The heavy chain homodimer serves as a scaffold for the probable homodimeric assembly of the respective non-catalytic subunits. The ICs and LICs bind directly to the HC dimer and the LCs assemble on the IC dimer. Interacts with DYNLT3. Interacts with DYNLT1. Interacts (dephosphorylated at Ser-84) with DCTN1. Interacts with BICD2. Interacts with SPEF2. Interacts with CFAP61. The phosphorylation status of Ser-84 appears to be involved in dynactin-dependent target binding. Post-translationally, pyrophosphorylation by 5-diphosphoinositol pentakisphosphate (5-IP7) promotes interaction with DCTN1. Serine pyrophosphorylation is achieved by Mg(2+)-dependent, but enzyme independent transfer of a beta-phosphate from a inositol pyrophosphate to a pre-phosphorylated serine residue.

It localises to the cytoplasm. It is found in the cytoskeleton. Its function is as follows. Acts as one of several non-catalytic accessory components of the cytoplasmic dynein 1 complex that are thought to be involved in linking dynein to cargos and to adapter proteins that regulate dynein function. Cytoplasmic dynein 1 acts as a motor for the intracellular retrograde motility of vesicles and organelles along microtubules. The intermediate chains mediate the binding of dynein to dynactin via its 150 kDa component (p150-glued) DCTN1. Involved in membrane-transport, such as Golgi apparatus, late endosomes and lysosomes. The sequence is that of Cytoplasmic dynein 1 intermediate chain 2 (Dync1i2) from Mus musculus (Mouse).